A 1190-amino-acid chain; its full sequence is PAN2-PAN3 deadenylation complex catalytic subunit PAN2 (1190 aa).

WD repeat units follow at residues 24-63 (TTIV…NSLY), 129-166 (NKFN…PNVL), 167-207 (SSFD…TMKT), 222-264 (GNYI…AIAP), 266-306 (PFPA…NVYL), and 322-361 (NNKP…KDFV). Positions 364 to 511 (PQPVEQPDII…FQYKFQGKLN (148 aa)) are linker. Residues 512 to 924 (KVPNCYSRLQ…KPIVIMYQQT (413 aa)) form the USP domain. One can recognise an Exonuclease domain in the interval 988–1158 (VAIDAEFVML…EDANTALLLY (171 aa)). The a divalent metal cation site is built by aspartate 991, glutamate 993, aspartate 1097, and aspartate 1150.

This sequence belongs to the peptidase C19 family. PAN2 subfamily. In terms of assembly, forms a heterotrimer with an asymmetric homodimer of the regulatory subunit PAN3 to form the poly(A)-nuclease (PAN) deadenylation complex. It depends on a divalent metal cation as a cofactor.

It is found in the cytoplasm. The catalysed reaction is Exonucleolytic cleavage of poly(A) to 5'-AMP.. Positively regulated by the regulatory subunit PAN3. Its function is as follows. Catalytic subunit of the poly(A)-nuclease (PAN) deadenylation complex, one of two cytoplasmic mRNA deadenylases involved in mRNA turnover. PAN specifically shortens poly(A) tails of RNA and the activity is stimulated by poly(A)-binding protein PAB1. PAN deadenylation is followed by rapid degradation of the shortened mRNA tails by the CCR4-NOT complex. Deadenylated mRNAs are then degraded by two alternative mechanisms, namely exosome-mediated 3'-5' exonucleolytic degradation, or deadenylation-dependent mRNA decaping and subsequent 5'-3' exonucleolytic degradation by XRN1. May also be involved in post-transcriptional maturation of mRNA poly(A) tails. In Candida albicans (strain SC5314 / ATCC MYA-2876) (Yeast), this protein is PAN2-PAN3 deadenylation complex catalytic subunit PAN2.